The sequence spans 107 residues: Anaphase-promoting complex subunit 14 (107 aa).

The APC/C is composed of at least 13 subunits: apc1, apc2, nuc2, apc4, apc5, cut9, apc8, apc10, apc11, hcn1, apc13, apc14 and apc15.

The protein localises to the ascus epiplasm. In terms of biological role, component of the anaphase promoting complex/cyclosome (APC/C), a cell cycle-regulated E3 ubiquitin-protein ligase complex that controls progression through mitosis and the G1 phase of the cell cycle. The APC/C is thought to confer substrate specificity and, in the presence of ubiquitin-conjugating E2 enzymes, it catalyzes the formation of protein-ubiquitin conjugates that are subsequently degraded by the 26S proteasome. Appears to play a role in spore wall formation. This is Anaphase-promoting complex subunit 14 from Schizosaccharomyces pombe (strain 972 / ATCC 24843) (Fission yeast).